Here is a 376-residue protein sequence, read N- to C-terminus: Protein-glutamate methylesterase/protein-glutamine glutaminase (376 aa).

The Response regulatory domain occupies 4-121; that stretch reads KVLVVDDSSF…ARNRDEAVSL (118 aa). The residue at position 55 (D55) is a 4-aspartylphosphate. Positions 142–161 are disordered; it reads SSQSTSTVESRTATTRTATS. Over residues 145–161 the composition is skewed to low complexity; sequence STSTVESRTATTRTATS. The region spanning 183–376 is the CheB-type methylesterase domain; sequence TGKKYQLTAI…ERMLVEVGLK (194 aa). Catalysis depends on residues S195, H222, and D318.

The protein belongs to the CheB family. Phosphorylated by CheA. Phosphorylation of the N-terminal regulatory domain activates the methylesterase activity.

The protein resides in the cytoplasm. The catalysed reaction is [protein]-L-glutamate 5-O-methyl ester + H2O = L-glutamyl-[protein] + methanol + H(+). It catalyses the reaction L-glutaminyl-[protein] + H2O = L-glutamyl-[protein] + NH4(+). Involved in chemotaxis. Part of a chemotaxis signal transduction system that modulates chemotaxis in response to various stimuli. Catalyzes the demethylation of specific methylglutamate residues introduced into the chemoreceptors (methyl-accepting chemotaxis proteins or MCP) by CheR. Also mediates the irreversible deamidation of specific glutamine residues to glutamic acid. The chain is Protein-glutamate methylesterase/protein-glutamine glutaminase from Aliivibrio fischeri (strain ATCC 700601 / ES114) (Vibrio fischeri).